Consider the following 564-residue polypeptide: Protein CPR-5 (564 aa).

Residues Met1–Val87 form a disordered region. A compositionally biased stretch (polar residues) spans Pro12–Ser28. Positions Gly29 to Met38 are enriched in basic and acidic residues. The span at Ser69 to Thr84 shows a compositional bias: low complexity. 5 helical membrane passes run Ile347 to Tyr367, Val411 to Leu431, Pro443 to Val463, Leu472 to Leu492, and Val526 to Phe546.

In terms of assembly, interacts with SIM and SMR1. As to expression, ubiquitous.

The protein resides in the membrane. It is found in the nucleus membrane. Its function is as follows. May play a role in transcriptional processes. Negatively regulates the senescence and chlorotic lesions induced by biotic (e.g. pathogens) and abiotic (e.g. sugars, darkness) agents, probably by controlling programmed cell death (pcd). Negative regulator of plant programmed cell death (PCD) and effector-triggered immunity (ETI). Promotes cell division and endoreduplication (e.g. in trichomes). The polypeptide is Protein CPR-5 (Arabidopsis thaliana (Mouse-ear cress)).